We begin with the raw amino-acid sequence, 338 residues long: Large ribosomal subunit protein uL3 (338 aa).

2 disordered regions span residues 230–256 and 315–338; these read HRKG…RPGQ and PARP…SQQP.

Belongs to the universal ribosomal protein uL3 family. Part of the 50S ribosomal subunit. Forms a cluster with proteins L14 and L24e.

Functionally, one of the primary rRNA binding proteins, it binds directly near the 3'-end of the 23S rRNA, where it nucleates assembly of the 50S subunit. The protein is Large ribosomal subunit protein uL3 of Pyrobaculum arsenaticum (strain DSM 13514 / JCM 11321 / PZ6).